The primary structure comprises 555 residues: F-box protein COS111 (555 aa).

2 disordered regions span residues 31–82 (MSVS…SVSN) and 124–147 (DHSI…KQHH). Low complexity predominate over residues 32–42 (SVSSRSSQEES). Residues 48 to 61 (ESVSSLSMQEQQTE) show a composition bias toward polar residues. Positions 129–142 (SGVTRSTVSTVRPT) are enriched in low complexity. The F-box domain occupies 196–246 (HKDLNSLPHEIMSKIVSHLDQRDVTMCLYVNKNMYSTAVRQLYKEPFFSST). Low complexity predominate over residues 327 to 346 (SSSSLSCSRTSSNSNSSTES). Residues 327–354 (SSSSLSCSRTSSNSNSSTESKPVKKRRS) form a disordered region.

In terms of biological role, F-box protein probably involved in ubiquitin conjugation pathway. The protein is F-box protein COS111 (COS111) of Yarrowia lipolytica (strain CLIB 122 / E 150) (Yeast).